We begin with the raw amino-acid sequence, 138 residues long: Thyrotropin subunit beta (138 aa).

The first 20 residues, 1–20 (MTATFLMSLLFGLAFGQTMS), serve as a signal peptide directing secretion. 6 disulfides stabilise this stretch: cysteine 22/cysteine 72, cysteine 36/cysteine 87, cysteine 39/cysteine 125, cysteine 47/cysteine 103, cysteine 51/cysteine 105, and cysteine 108/cysteine 115. N-linked (GlcNAc...) asparagine glycosylation is present at asparagine 43. A propeptide spanning residues 133 to 138 (LVGFPV) is cleaved from the precursor.

Belongs to the glycoprotein hormones subunit beta family. Heterodimer of a common alpha chain and a unique beta chain which confers biological specificity to thyrotropin, lutropin, follitropin and gonadotropin.

The protein resides in the secreted. Functionally, indispensable for the control of thyroid structure and metabolism. This chain is Thyrotropin subunit beta (TSHB), found in Monodelphis domestica (Gray short-tailed opossum).